Consider the following 196-residue polypeptide: UPF0056 membrane protein BUsg_434 (196 aa).

The next 6 membrane-spanning stretches (helical) occupy residues 8-28, 45-65, 71-91, 105-125, 134-154, and 174-194; these read TILL…MTIL, IIAL…LTIL, TVSI…IFPS, FLVP…TLML, MPYL…ILLL, and MGLI…KAWF.

The protein belongs to the UPF0056 (MarC) family.

It localises to the cell membrane. In Buchnera aphidicola subsp. Schizaphis graminum (strain Sg), this protein is UPF0056 membrane protein BUsg_434.